The primary structure comprises 361 residues: Peptide chain release factor 1 (361 aa).

An N5-methylglutamine modification is found at glutamine 237. The tract at residues 283-307 (AQQQEQQEQQSSTRKELIGSGDRSQ) is disordered.

The protein belongs to the prokaryotic/mitochondrial release factor family. Post-translationally, methylated by PrmC. Methylation increases the termination efficiency of RF1.

It is found in the cytoplasm. In terms of biological role, peptide chain release factor 1 directs the termination of translation in response to the peptide chain termination codons UAG and UAA. The protein is Peptide chain release factor 1 of Vesicomyosocius okutanii subsp. Calyptogena okutanii (strain HA).